The sequence spans 138 residues: MALLPDKEKLLRNFLRCANWEEKYLYIIELGQRLPELRDEDRSSQNSIQGCQSQVWIVMRQNAQGIIKLQGDSDAAIVKGLIAVVFILYDQMTPQDIVNFDVRPWFEKMALTQHLTPSRSQGLEAMIRAIRAKAAALS.

Cys51 serves as the catalytic Cysteine persulfide intermediate.

The protein belongs to the SufE family. Homodimer. Interacts with SufS.

Its subcellular location is the cytoplasm. Its pathway is cofactor biosynthesis; iron-sulfur cluster biosynthesis. Participates in cysteine desulfuration mediated by SufS. Cysteine desulfuration mobilizes sulfur from L-cysteine to yield L-alanine and constitutes an essential step in sulfur metabolism for biosynthesis of a variety of sulfur-containing biomolecules. Functions as a sulfur acceptor for SufS, by mediating the direct transfer of the sulfur atom from the S-sulfanylcysteine of SufS, an intermediate product of cysteine desulfuration process. The sequence is that of Cysteine desulfuration protein SufE from Escherichia coli O17:K52:H18 (strain UMN026 / ExPEC).